The sequence spans 60 residues: UPF0291 protein CTC_01690.1 (60 aa).

This sequence belongs to the UPF0291 family.

Its subcellular location is the cytoplasm. The sequence is that of UPF0291 protein CTC_01690.1 from Clostridium tetani (strain Massachusetts / E88).